The primary structure comprises 1236 residues: Complement factor H (1236 aa).

The N-terminal stretch at 1–18 (MRFPAKIVWLVLWTVCVA) is a signal peptide. 20 Sushi domains span residues 19–82 (EDCK…ICRK), 83–143 (KPCA…ICEV), 144–207 (VKCL…KCVE), 208–264 (IFCK…TCIE), 265–322 (ITCD…RCAW), 325–383 (CSYP…EEPC), 385–442 (RQCI…RCIR), 444–505 (KTCS…VCIK), 507–562 (CDRP…KAAC), 565–623 (RECS…TCKV), 627–685 (KSCA…VCIE), 688–745 (RTCG…QCIA), 750–804 (RKCK…DCNE), 809–866 (QLCP…RCIE), 868–936 (IGCS…QCVG), 937–994 (LPCG…DCIS), 995–1053 (TNCV…ACRD), 1054–1111 (VSCG…QCKD), 1114–1172 (GKCG…KCLE), and 1173–1235 (ACVI…YPRC). 40 cysteine pairs are disulfide-bonded: Cys21-Cys66, Cys52-Cys80, Cys85-Cys129, Cys114-Cys141, Cys146-Cys192, Cys178-Cys205, Cys210-Cys251, Cys237-Cys262, Cys267-Cys309, Cys294-Cys320, Cys325-Cys372, Cys355-Cys383, Cys387-Cys429, Cys414-Cys440, Cys446-Cys492, Cys475-Cys503, Cys507-Cys551, Cys534-Cys562, Cys567-Cys609, Cys595-Cys621, Cys629-Cys672, Cys658-Cys683, Cys690-Cys732, Cys718-Cys743, Cys752-Cys791, Cys780-Cys802, Cys811-Cys853, Cys839-Cys864, Cys870-Cys923, Cys909-Cys934, Cys939-Cys981, Cys967-Cys992, Cys997-Cys1040, Cys1026-Cys1051, Cys1056-Cys1098, Cys1084-Cys1109, Cys1116-Cys1159, Cys1145-Cys1170, Cys1174-Cys1225, and Cys1208-Cys1235. Tyr168 and Tyr170 each carry sulfotyrosine. A sulfotyrosine mark is found at Tyr465 and Tyr473. Sulfotyrosine is present on residues Tyr575, Tyr579, and Tyr585. N-linked (GlcNAc...) asparagine glycosylation occurs at Asn775. N-linked (GlcNAc...) asparagine glycosylation occurs at Asn1100.

As to quaternary structure, homodimer. Also forms homooligomers. Interacts with complement protein C3b; this interaction inhibits complement activation. Interacts with complement protein C3d. Interacts with CR3/ITGAM; this interaction mediates adhesion of neutrophils to pathogens leading to pathogen clearance. Post-translationally, sulfated on tyrosine residues. CFH is one of the most abundant complement components in blood where the liver is the major source of CFH protein in vivo. in addition, CFH is secreted by additional cell types including monocytes, fibroblasts, or endothelial cells.

It is found in the secreted. Glycoprotein that plays an essential role in maintaining a well-balanced immune response by modulating complement activation. Acts as a soluble inhibitor of complement, where its binding to self markers such as glycan structures prevents complement activation and amplification on cell surfaces. Accelerates the decay of the complement alternative pathway (AP) C3 convertase C3bBb, thus preventing local formation of more C3b, the central player of the complement amplification loop. As a cofactor of the serine protease factor I, CFH also regulates proteolytic degradation of already-deposited C3b. In addition, mediates several cellular responses through interaction with specific receptors. For example, interacts with CR3/ITGAM receptor and thereby mediates the adhesion of human neutrophils to different pathogens. In turn, these pathogens are phagocytosed and destroyed. The chain is Complement factor H (CFH) from Bos taurus (Bovine).